Consider the following 93-residue polypeptide: SH3 domain-binding glutamic acid-rich-like protein 3 (93 aa).

S2 carries the post-translational modification N-acetylserine. Residues 2-93 (SGLRVYSTSV…NTLQEFLKLA (92 aa)) form the Glutaredoxin domain. Residue T9 is glycosylated (O-linked (GalNAc...) threonine).

The protein belongs to the SH3BGR family. As to quaternary structure, homodimer. Interacts with MYO1C (via its IQ motifs); the interaction is dependent on calcium and takes place at membrane ruffles. Post-translationally, may be glycosylated.

It is found in the cytoplasm. Its subcellular location is the cytosol. The protein localises to the cell projection. It localises to the ruffle membrane. The protein resides in the nucleus. In terms of biological role, could act as a modulator of glutaredoxin biological activity. May play a role in cytoskeleton organization. The sequence is that of SH3 domain-binding glutamic acid-rich-like protein 3 (SH3BGRL3) from Bos taurus (Bovine).